We begin with the raw amino-acid sequence, 318 residues long: MKFGKEFRTHLEETLPEWRDKFLCYKPLKKLLKYYPYYSADFGPANSDHNDSRPVFADTTNISSAADDGGVVPGVRPSEDLQGSFVRILNDELEKFNDFYVDKEEDFVIRLQELKERIEQVKEKNGEFASESEFSEEMMDIRRDLVTIHGEMVLLKNYSSLNFAGLVKILKKYDKRTGGLLRLPFTQLVLHQPFFTTEPLTRLVRECEANLELLFPSEAEVVESSSAVQAHSSSHQHNSPRISAETSSTLGNENLDIYKSTLAAMRAIRGLQKASSTYNPLSFSSLLQNEDDETVTAENSPNSGNKDDSEKEDTGPSH.

Residues methionine 1 to glutamine 187 enclose the SPX domain. Residues serine 226 to histidine 237 are compositionally biased toward low complexity. Disordered regions lie at residues serine 226–serine 247 and serine 284–histidine 318. Positions asparagine 305–histidine 318 are enriched in basic and acidic residues.

This Arabidopsis thaliana (Mouse-ear cress) protein is SPX domain-containing protein 4 (SPX4).